The chain runs to 657 residues: Glycogen debranching enzyme (657 aa).

The active-site Nucleophile is the Asp336. Catalysis depends on Glu371, which acts as the Proton donor. Residues Ala460–Gly481 are disordered.

It belongs to the glycosyl hydrolase 13 family.

The catalysed reaction is Hydrolysis of (1-&gt;6)-alpha-D-glucosidic linkages to branches with degrees of polymerization of three or four glucose residues in limit dextrin.. The protein operates within glycan degradation; glycogen degradation. Its function is as follows. Removes maltotriose and maltotetraose chains that are attached by 1,6-alpha-linkage to the limit dextrin main chain, generating a debranched limit dextrin. This chain is Glycogen debranching enzyme, found in Escherichia coli O157:H7.